Consider the following 245-residue polypeptide: Carboxy-S-adenosyl-L-methionine synthase (245 aa).

S-adenosyl-L-methionine is bound by residues Tyr-42, 67–69, 92–93, 120–121, Asn-135, and Arg-202; these read GCS, DN, and DI.

The protein belongs to the class I-like SAM-binding methyltransferase superfamily. Cx-SAM synthase family. As to quaternary structure, homodimer.

It carries out the reaction prephenate + S-adenosyl-L-methionine = carboxy-S-adenosyl-L-methionine + 3-phenylpyruvate + H2O. In terms of biological role, catalyzes the conversion of S-adenosyl-L-methionine (SAM) to carboxy-S-adenosyl-L-methionine (Cx-SAM). This Vibrio campbellii (strain ATCC BAA-1116) protein is Carboxy-S-adenosyl-L-methionine synthase.